The sequence spans 140 residues: Nucleoside diphosphate kinase (140 aa).

ATP contacts are provided by Lys-11, Phe-59, Arg-87, Thr-93, Arg-104, and Asn-114. His-117 acts as the Pros-phosphohistidine intermediate in catalysis.

It belongs to the NDK family. The cofactor is Mg(2+).

It is found in the cytoplasm. The enzyme catalyses a 2'-deoxyribonucleoside 5'-diphosphate + ATP = a 2'-deoxyribonucleoside 5'-triphosphate + ADP. It carries out the reaction a ribonucleoside 5'-diphosphate + ATP = a ribonucleoside 5'-triphosphate + ADP. Functionally, major role in the synthesis of nucleoside triphosphates other than ATP. The ATP gamma phosphate is transferred to the NDP beta phosphate via a ping-pong mechanism, using a phosphorylated active-site intermediate. This Metallosphaera sedula (strain ATCC 51363 / DSM 5348 / JCM 9185 / NBRC 15509 / TH2) protein is Nucleoside diphosphate kinase.